Reading from the N-terminus, the 117-residue chain is Large ribosomal subunit protein uL18 (117 aa).

This sequence belongs to the universal ribosomal protein uL18 family. Part of the 50S ribosomal subunit; part of the 5S rRNA/L5/L18/L25 subcomplex. Contacts the 5S and 23S rRNAs.

Functionally, this is one of the proteins that bind and probably mediate the attachment of the 5S RNA into the large ribosomal subunit, where it forms part of the central protuberance. The chain is Large ribosomal subunit protein uL18 from Enterobacter sp. (strain 638).